A 770-amino-acid chain; its full sequence is Probable copper-exporting P-type ATPase V (770 aa).

The region spanning 1-66 (MRVCVTGFNV…AITKAQHVPA (66 aa)) is the HMA domain. Positions 103-130 (DKPLKASRCGGRPRGPVRGSASWPGEQN) are disordered. Over residues 110–121 (RCGGRPRGPVRG) the composition is skewed to low complexity. Transmembrane regions (helical) follow at residues 141–161 (VWLA…FGAY), 164–184 (AGWL…WPIL), 193–213 (ALTS…FVYS), 217–237 (LFAG…FVVL), 377–397 (AVFV…WTLI), and 402–422 (VAGM…ALGL). Residue aspartate 460 is the 4-aspartylphosphate intermediate of the active site. The Mg(2+) site is built by aspartate 660 and aspartate 664. 2 helical membrane passes run 718–737 (LGWA…LGAL) and 741–760 (VAGA…SLRL).

This sequence belongs to the cation transport ATPase (P-type) (TC 3.A.3) family. Type IB subfamily.

It localises to the cell membrane. It catalyses the reaction Cu(+)(in) + ATP + H2O = Cu(+)(out) + ADP + phosphate + H(+). In terms of biological role, necessary for copper homeostasis and likely functions as a copper exporter. Also required for full virulence. The protein is Probable copper-exporting P-type ATPase V (ctpV) of Mycobacterium tuberculosis (strain CDC 1551 / Oshkosh).